The chain runs to 238 residues: Ribonuclease 3 (238 aa).

Residues 4 to 134 (PRQALLDAFG…LLGAIYLHHG (131 aa)) enclose the RNase III domain. Residue Glu44 coordinates Mg(2+). Asp48 is an active-site residue. Mg(2+)-binding residues include Asp120 and Glu123. Glu123 is a catalytic residue. The region spanning 161–229 (DWKTSLQELT…ASAAWKALDV (69 aa)) is the DRBM domain.

Belongs to the ribonuclease III family. As to quaternary structure, homodimer. Requires Mg(2+) as cofactor.

The protein resides in the cytoplasm. It catalyses the reaction Endonucleolytic cleavage to 5'-phosphomonoester.. Its function is as follows. Digests double-stranded RNA. Involved in the processing of primary rRNA transcript to yield the immediate precursors to the large and small rRNAs (23S and 16S). Processes some mRNAs, and tRNAs when they are encoded in the rRNA operon. Processes pre-crRNA and tracrRNA of type II CRISPR loci if present in the organism. This Mycobacterium leprae (strain TN) protein is Ribonuclease 3.